The chain runs to 65 residues: Large ribosomal subunit protein uL29c (65 aa).

The protein belongs to the universal ribosomal protein uL29 family.

The protein localises to the plastid. Its subcellular location is the chloroplast. The polypeptide is Large ribosomal subunit protein uL29c (rpl29) (Guillardia theta (Cryptophyte)).